We begin with the raw amino-acid sequence, 558 residues long: MAKNRKLPNPEDLLFWIRYQMFFFWKKVKRIHIVRKFRKFIYNFFIFLDDLLLSSVRKVRKFSFFLIFKYKYFIINLEDFLKFIKEIFDTSVLIVSVGTRFFHESESQEKDSELIFNFIPEIINSDGLMGTKVLLESKKILYENENKEKDLKLIVHFIPDIINNNVLIGVKVLLEKKKIFYENENIKDLEFIEGSELEGQEIKSEDIEEKVVDKDYDDSEGRVLLDESDSQAYFCREIRTREFWKQKYGNRFYYLNGHGIGGNICANDFVEFKDIKDIKKRKKYDSNKNDILVGVRDLLREHLKEKKMNLKLSGDKRIEEYDPNFNFDNPDLISSFNSTSTSTSTSTSSSNDLNLDSDSDDSDSDDSDSDSDSDSDSEIDYLDFNFDDSQLDEEGREIKKKMMIKSLRLYRDFALQSMYGADFFMMETESDDDSDSDIDEFEKVKNKYKLTFDISKEIEKDNISDFDYFLLDLFLYGPLNFKVTDICDIDQMYRVQRRERYEKMFETYKHISSIFAFSINFIFIPSDRFISKDSLQGEFIFDEFHSMGNELKVLILYW.

Low complexity predominate over residues 338 to 354 (STSTSTSTSTSSSNDLN). The interval 338–380 (STSTSTSTSTSSSNDLNLDSDSDDSDSDDSDSDSDSDSDSEID) is disordered. Positions 355-380 (LDSDSDDSDSDDSDSDSDSDSDSEID) are enriched in acidic residues.

Its subcellular location is the plastid. This is an uncharacterized protein from Euglena longa (Euglenophycean alga).